The chain runs to 146 residues: MTPAHLLILAAVCVSPLGASSSRPMPLNLYQFKNMIQCTVPSRSWWDFADYGCYCGRGGSGTPVDDLDRCCQVHDHCYNEAEKISGCWPYSKTYSYECSQGTLTCKGGNNACAAAVCDCDRLAAICFAGAPYNNNNYNIDLKARCQ.

The signal sequence occupies residues 1 to 21 (MTPAHLLILAAVCVSPLGASS). Residues 22–27 (SRPMPL) constitute a propeptide that is removed on maturation. Cystine bridges form between Cys-38–Cys-98, Cys-53–Cys-145, Cys-55–Cys-71, Cys-70–Cys-126, Cys-77–Cys-119, Cys-87–Cys-112, and Cys-105–Cys-117. Residues Tyr-54, Gly-56, and Gly-58 each coordinate Ca(2+). His-74 is a catalytic residue. Asp-75 is a Ca(2+) binding site. Asp-120 is an active-site residue.

The protein belongs to the phospholipase A2 family. Group I subfamily. D49 sub-subfamily. The cofactor is Ca(2+). As to expression, expressed by the venom gland.

The protein localises to the secreted. The enzyme catalyses a 1,2-diacyl-sn-glycero-3-phosphocholine + H2O = a 1-acyl-sn-glycero-3-phosphocholine + a fatty acid + H(+). Its function is as follows. PLA2 catalyzes the calcium-dependent hydrolysis of the 2-acyl groups in 3-sn-phosphoglycerides. This Naja atra (Chinese cobra) protein is Acidic phospholipase A2 2.